The chain runs to 141 residues: Proteasome maturation protein (141 aa).

Lys-39 participates in a covalent cross-link: Glycyl lysine isopeptide (Lys-Gly) (interchain with G-Cter in SUMO2).

The protein belongs to the POMP/UMP1 family. Constituent of preproteasomes, but not of mature 20S proteasomes. Within the preproteasome, may directly interact with PSMB1/beta6, PSMB4/beta7, PSMB5/beta5, PSMB6/beta1 and PSMB9/beta1i. Interaction with PSMB8/beta5i is controversial. Forms tetramers.

It is found in the cytoplasm. The protein resides in the cytosol. The protein localises to the nucleus. Its subcellular location is the microsome membrane. Its function is as follows. Molecular chaperone essential for the assembly of standard proteasomes and immunoproteasomes. Degraded after completion of proteasome maturation. Mediates the association of 20S preproteasome with the endoplasmic reticulum. The chain is Proteasome maturation protein (POMP) from Bos taurus (Bovine).